The sequence spans 688 residues: G protein-coupled receptor kinase 3 (688 aa).

The tract at residues 1 to 190 is N-terminal; that stretch reads MADLEAVLAD…ELNIHLSMND (190 aa). One can recognise an RGS domain in the interval 54-175; that stretch reads TFDKIFNQKI…MESEKFTRFC (122 aa). Positions 191 to 453 constitute a Protein kinase domain; sequence FSVHRIIGRG…ARELKEHIFF (263 aa). ATP is bound by residues 197–205 and lysine 220; that span reads IGRGGFGEV. Aspartate 317 serves as the catalytic Proton acceptor. Positions 454–521 constitute an AGC-kinase C-terminal domain; the sequence is KGIDWQYVYL…MISERWQQEV (68 aa). The PH domain occupies 558–652; it reads DCIMHGYMLK…WLKELTCTFN (95 aa).

Belongs to the protein kinase superfamily. AGC Ser/Thr protein kinase family. GPRK subfamily. As to quaternary structure, interacts with GIT1. In terms of processing, ubiquitinated. In terms of tissue distribution, expressed in brain cortex, hippocampus, striatum, hypothalamus, cerebellum and brainstem (at protein level).

It is found in the postsynapse. Its subcellular location is the presynapse. The catalysed reaction is [beta-adrenergic receptor] + ATP = [beta-adrenergic receptor]-phosphate + ADP + H(+). Its function is as follows. Specifically phosphorylates the agonist-occupied form of the beta-adrenergic and closely related receptors. This Rattus norvegicus (Rat) protein is G protein-coupled receptor kinase 3.